The chain runs to 199 residues: Guanylate kinase (199 aa).

One can recognise a Guanylate kinase-like domain in the interval 20-198 (GKLIVLTGPS…ALQAIEVALF (179 aa)). Position 27-34 (27-34 (GPSGVGKG)) interacts with ATP.

Belongs to the guanylate kinase family.

It localises to the cytoplasm. It catalyses the reaction GMP + ATP = GDP + ADP. In terms of biological role, essential for recycling GMP and indirectly, cGMP. This chain is Guanylate kinase, found in Trichormus variabilis (strain ATCC 29413 / PCC 7937) (Anabaena variabilis).